Consider the following 235-residue polypeptide: uncharacterized protein (235 aa).

2 disordered regions span residues 1–47 (MSHK…QSTN) and 78–128 (QEHH…KQPQ). A compositionally biased stretch (polar residues) spans 20-33 (HPPGQSLSSISWSP). Low complexity predominate over residues 84-98 (QQQQQQRQNIRSQNS). Positions 106–128 (VQESQWTSSASNSSLKKQEKQPQ) are enriched in polar residues.

This is an uncharacterized protein from Saccharomyces cerevisiae (strain ATCC 204508 / S288c) (Baker's yeast).